Consider the following 302-residue polypeptide: Tritrans,polycis-undecaprenyl-diphosphate synthase (geranylgeranyl-diphosphate specific) (302 aa).

Residue aspartate 33 is part of the active site. A Mg(2+)-binding site is contributed by aspartate 33. Residues 34–37 (GNRR) and 78–80 (STE) contribute to the substrate site. Asparagine 81 acts as the Proton acceptor in catalysis. Substrate is bound by residues phenylalanine 82, arginine 84, arginine 203, and 209–211 (RTS).

This sequence belongs to the UPP synthase family. As to quaternary structure, homodimer. Requires Mg(2+) as cofactor.

It catalyses the reaction geranylgeranyl diphosphate + 7 isopentenyl diphosphate = tri-trans,hepta-cis-undecaprenyl diphosphate + 7 diphosphate. Its function is as follows. Catalyzes the sequential condensation of isopentenyl diphosphate (IPP) with geranylgeranyl diphosphate (GGPP) to yield (2Z,6Z,10Z,14Z,18Z,22Z,26Z,30E,34E,38E)-undecaprenyl diphosphate (tritrans,heptacis-UPP). It is probably the precursor of glycosyl carrier lipids. The sequence is that of Tritrans,polycis-undecaprenyl-diphosphate synthase (geranylgeranyl-diphosphate specific) from Halobacterium salinarum (strain ATCC 700922 / JCM 11081 / NRC-1) (Halobacterium halobium).